A 140-amino-acid polypeptide reads, in one-letter code: L-fucose mutarotase (140 aa).

The active-site Proton donor is the His22. Residues Asp30, Arg107, and 129-131 (YGN) each bind substrate.

Belongs to the RbsD / FucU family. FucU mutarotase subfamily. In terms of assembly, homodecamer.

Its subcellular location is the cytoplasm. It carries out the reaction alpha-L-fucose = beta-L-fucose. It functions in the pathway carbohydrate metabolism; L-fucose metabolism. In terms of biological role, involved in the anomeric conversion of L-fucose. This is L-fucose mutarotase from Citrobacter koseri (strain ATCC BAA-895 / CDC 4225-83 / SGSC4696).